The sequence spans 200 residues: Recombination protein RecR (200 aa).

A C4-type zinc finger spans residues cysteine 57–cysteine 72. A Toprim domain is found at threonine 80–proline 175.

The protein belongs to the RecR family.

May play a role in DNA repair. It seems to be involved in an RecBC-independent recombinational process of DNA repair. It may act with RecF and RecO. In Pseudomonas entomophila (strain L48), this protein is Recombination protein RecR.